The chain runs to 377 residues: Prostaglandin reductase-3 (377 aa).

The residue at position 35 (lysine 35) is an N6-acetyllysine. Residues threonine 185, serine 205, lysine 209, tyrosine 224, serine 247, isoleucine 269, and tyrosine 275 each contribute to the NADP(+) site. The residue at position 299 (serine 299) is a Phosphoserine. Residues phenylalanine 303 to leucine 305 and asparagine 361 each bind NADP(+).

Belongs to the zinc-containing alcohol dehydrogenase family. Quinone oxidoreductase subfamily.

The protein resides in the peroxisome. It carries out the reaction 13,14-dihydro-15-oxo-prostaglandin E2 + NADP(+) = 15-oxoprostaglandin E2 + NADPH + H(+). It catalyses the reaction 13,14-dihydro-15-oxo-prostaglandin E1 + NADP(+) = 15-oxoprostaglandin E1 + NADPH + H(+). The enzyme catalyses 13,14-dihydro-15-oxo-PGF2alpha + NADP(+) = 15-oxoprostaglandin F2alpha + NADPH + H(+). The catalysed reaction is 13,14-dihydro-15-oxo-prostaglandin F1alpha + NADP(+) = 15-oxoprostaglandin F1alpha + NADPH + H(+). In terms of biological role, functions as 15-oxo-prostaglandin 13-reductase and acts on 15-keto-PGE1, 15-keto-PGE2, 15-keto-PGE1-alpha and 15-keto-PGE2-alpha with highest efficiency towards 15-keto-PGE2-alpha. Overexpression represses transcriptional activity of PPARG and inhibits adipocyte differentiation. This is Prostaglandin reductase-3 (PTGR3) from Bos taurus (Bovine).